The following is a 229-amino-acid chain: UPF0228 protein MA_3119 (229 aa).

The span at 35 to 66 (STPVNTSTPVNTSTPVNTSTPVNTSTPVSTST) shows a compositional bias: low complexity. A disordered region spans residues 35–67 (STPVNTSTPVNTSTPVNTSTPVNTSTPVSTSTI).

This sequence belongs to the UPF0228 family.

The chain is UPF0228 protein MA_3119 from Methanosarcina acetivorans (strain ATCC 35395 / DSM 2834 / JCM 12185 / C2A).